Here is a 321-residue protein sequence, read N- to C-terminus: Gap junction delta-2 protein (321 aa).

Over 1–19 the chain is Cytoplasmic; the sequence is MGEWTILERLLEAAVQQHS. A helical membrane pass occupies residues 20–42; sequence TMIGRILLTVVVIFRILIVAIVG. The Extracellular portion of the chain corresponds to 43–75; that stretch reads ETVYDDEQTMFVCNTLQPGCNQACYDRAFPISH. The chain crosses the membrane as a helical span at residues 76–98; the sequence is IRYWVFQIIMVCTPSLCFITYSV. Residues 99-197 are Cytoplasmic-facing; the sequence is HQSAKQRERR…KLRRQEGISR (99 aa). The tract at residues 118–141 is disordered; the sequence is RDPPESIGGPGGTGGGGSGGGKRE. Residues 125-137 are compositionally biased toward gly residues; the sequence is GGPGGTGGGGSGG. Residues 198-220 form a helical membrane-spanning segment; that stretch reads FYIIQVVFRNALEIGFLVGQYFL. Topologically, residues 221–252 are extracellular; it reads YGFSVPGLYECNRYPCIKEVECYVSRPTEKTV. The chain crosses the membrane as a helical span at residues 253-275; sequence FLVFMFAVSGICVVLNLAELNHL. Residues 276–321 lie on the Cytoplasmic side of the membrane; that stretch reads GWRKIKLAVRGAQAKRKSIYEIRNKDLPRVSVPNFGRTQSSDSAYV.

This sequence belongs to the connexin family. Delta-type subfamily. As to quaternary structure, a connexon is composed of a hexamer of connexins. Highly expressed in neurons.

The protein localises to the cell membrane. It localises to the cell junction. The protein resides in the gap junction. One gap junction consists of a cluster of closely packed pairs of transmembrane channels, the connexons, through which materials of low MW diffuse from one cell to a neighboring cell. The sequence is that of Gap junction delta-2 protein (GJD2) from Homo sapiens (Human).